We begin with the raw amino-acid sequence, 137 residues long: Small ribosomal subunit protein uS12 (137 aa).

2 disordered regions span residues 1–22 (MPTINQLVRKPRKSKVSKSKSP) and 35–57 (ATNNAAPQKRGVATRVGTMTPKK). The segment covering 9 to 18 (RKPRKSKVSK) has biased composition (basic residues). Residue aspartate 102 is modified to 3-methylthioaspartic acid.

Belongs to the universal ribosomal protein uS12 family. As to quaternary structure, part of the 30S ribosomal subunit. Contacts proteins S8 and S17. May interact with IF1 in the 30S initiation complex.

In terms of biological role, with S4 and S5 plays an important role in translational accuracy. Interacts with and stabilizes bases of the 16S rRNA that are involved in tRNA selection in the A site and with the mRNA backbone. Located at the interface of the 30S and 50S subunits, it traverses the body of the 30S subunit contacting proteins on the other side and probably holding the rRNA structure together. The combined cluster of proteins S8, S12 and S17 appears to hold together the shoulder and platform of the 30S subunit. This chain is Small ribosomal subunit protein uS12, found in Leuconostoc mesenteroides subsp. mesenteroides (strain ATCC 8293 / DSM 20343 / BCRC 11652 / CCM 1803 / JCM 6124 / NCDO 523 / NBRC 100496 / NCIMB 8023 / NCTC 12954 / NRRL B-1118 / 37Y).